The chain runs to 275 residues: UPF0758 protein RL2068 (275 aa).

The interval 1 to 45 is disordered; the sequence is MAKGPVSTSSDDELPFETQEPIAADERSFFGGQPQKPSAPNARAA. One can recognise an MPN domain in the interval 153–275; sequence VLSSWSSVIQ…HVSLKGLKLI (123 aa). Zn(2+)-binding residues include His-224, His-226, and Asp-237. Residues 224 to 237 carry the JAMM motif motif; the sequence is HNHPSGDPTPSRAD.

This sequence belongs to the UPF0758 family.

The polypeptide is UPF0758 protein RL2068 (Rhizobium johnstonii (strain DSM 114642 / LMG 32736 / 3841) (Rhizobium leguminosarum bv. viciae)).